The chain runs to 90 residues: Envelope glycoprotein N (90 aa).

The signal sequence occupies residues M1 to S21. The Virion surface segment spans residues L22 to T55. A helical membrane pass occupies residues F56 to L76. The Intravirion portion of the chain corresponds to R77–K90.

This sequence belongs to the herpesviridae glycoprotein N family. In terms of assembly, interacts (via N-terminus) with gM (via N-terminus). The gM-gN heterodimer forms the gCII complex.

The protein localises to the virion membrane. Its subcellular location is the host membrane. It is found in the host Golgi apparatus. It localises to the host trans-Golgi network. In terms of biological role, envelope glycoprotein necessary for proper maturation of gM and modulation of its membrane fusion activity. Also plays a critical role in virion morphogenesis. The protein is Envelope glycoprotein N of Saimiriine herpesvirus 2 (strain 11) (SaHV-2).